A 261-amino-acid polypeptide reads, in one-letter code: Thiamine thiazole synthase (261 aa).

NAD(+) contacts are provided by residues alanine 33, 52–53 (ER), glycine 60, valine 124, and 152–154 (HVD). The Fe cation site is built by aspartate 154 and histidine 169. Methionine 219 is a binding site for NAD(+). A glycine-binding site is contributed by arginine 229.

This sequence belongs to the THI4 family. As to quaternary structure, homooctamer; tetramer of dimers. The cofactor is Fe(2+).

It carries out the reaction hydrogen sulfide + glycine + NAD(+) = ADP-5-ethyl-4-methylthiazole-2-carboxylate + nicotinamide + 3 H2O + H(+). Its pathway is cofactor biosynthesis; thiamine diphosphate biosynthesis. Involved in the biosynthesis of the thiazole moiety of thiamine. Catalyzes the conversion of NAD and glycine to adenosine diphosphate 5-(2-hydroxyethyl)-4-methylthiazole-2-carboxylate (ADT), an adenylated thiazole intermediate, using free sulfide as a source of sulfur. This chain is Thiamine thiazole synthase, found in Pyrobaculum islandicum (strain DSM 4184 / JCM 9189 / GEO3).